Reading from the N-terminus, the 298-residue chain is Anamorsin homolog (298 aa).

The interval 1-143 is N-terminal SAM-like domain; it reads MTQLIITYQS…IKAEKPSWKP (143 aa). Residues 143–162 form a linker region; sequence PEEGKVLVDDIDLEGSVPDI. Positions 175, 182, 185, and 187 each coordinate [2Fe-2S] cluster. The interval 175–187 is fe-S binding site A; it reads CKSKERACNNCNC. [4Fe-4S] cluster-binding residues include Cys-218, Cys-221, Cys-229, and Cys-232. 2 consecutive short sequence motifs (cx2C motif) follow at residues 218 to 221 and 229 to 232; these read CGNC and CSGC. The interval 218-232 is fe-S binding site B; it reads CGNCYLGDAFRCSGC.

The protein belongs to the anamorsin family. In terms of assembly, monomer. [2Fe-2S] cluster serves as cofactor. Requires [4Fe-4S] cluster as cofactor.

It localises to the cytoplasm. The protein localises to the mitochondrion intermembrane space. In terms of biological role, component of the cytosolic iron-sulfur (Fe-S) protein assembly (CIA) machinery. Required for the maturation of extramitochondrial Fe-S proteins. Part of an electron transfer chain functioning in an early step of cytosolic Fe-S biogenesis, facilitating the de novo assembly of a [4Fe-4S] cluster on the cytosolic Fe-S scaffold complex. Electrons are transferred from NADPH via a FAD- and FMN-containing diflavin oxidoreductase. Together with the diflavin oxidoreductase, also required for the assembly of the diferric tyrosyl radical cofactor of ribonucleotide reductase (RNR), probably by providing electrons for reduction during radical cofactor maturation in the catalytic small subunit. The polypeptide is Anamorsin homolog (Cryptosporidium hominis).